A 276-amino-acid chain; its full sequence is Probable endonuclease 4 (276 aa).

9 residues coordinate Zn(2+): H70, H108, E144, D177, H180, H211, D224, H226, and E256.

Belongs to the AP endonuclease 2 family. Requires Zn(2+) as cofactor.

The catalysed reaction is Endonucleolytic cleavage to 5'-phosphooligonucleotide end-products.. Endonuclease IV plays a role in DNA repair. It cleaves phosphodiester bonds at apurinic or apyrimidinic (AP) sites, generating a 3'-hydroxyl group and a 5'-terminal sugar phosphate. This is Probable endonuclease 4 from Metamycoplasma arthritidis (strain 158L3-1) (Mycoplasma arthritidis).